A 99-amino-acid polypeptide reads, in one-letter code: Nucleoid-associated protein EbfC (99 aa).

It belongs to the YbaB/EbfC family. Homodimer.

It is found in the cytoplasm. Its subcellular location is the nucleoid. Functionally, binds to DNA and alters its conformation. May be involved in regulation of gene expression, nucleoid organization and DNA protection. In Borrelia hermsii (strain HS1 / DAH), this protein is Nucleoid-associated protein EbfC.